We begin with the raw amino-acid sequence, 323 residues long: Formyl peptide receptor-related sequence 4 (323 aa).

At 1 to 29 (MEVNISMPLNGSEVVFYDSTTSRVLWILS) the chain is on the extracellular side. N-linked (GlcNAc...) asparagine glycans are attached at residues N4 and N10. Residues 30-50 (LVVLFITFVLGVLGNGLVIWV) form a helical membrane-spanning segment. Over 51–66 (AGFQMAHTVTTVSYLN) the chain is Cytoplasmic. A helical transmembrane segment spans residues 67 to 87 (LALSDLSFMATLPLHIISMVM). At 88–99 (RGKWLFGWFLCK) the chain is on the extracellular side. Residues C98 and C176 are joined by a disulfide bond. A helical membrane pass occupies residues 100–120 (LVHIIANINLFVSIFLITLIA). Over 121–144 (MDRCICVLCPVWSQNHRTVSLARK) the chain is Cytoplasmic. A helical membrane pass occupies residues 145–165 (VVLGAWIFALLLTLPHFLFLT). Over 166-202 (TVRDARGDVYCISKFESWVATSEEQLKVSVIAATASG) the chain is Extracellular. Residues 203 to 223 (IINFIIGFSMPMSFIAICYGL) traverse the membrane as a helical segment. The Cytoplasmic segment spans residues 224–241 (MAAKICRRGFVNSSRPLR). A helical transmembrane segment spans residues 242–262 (VLTAVAVSFFVCWFPFQLIML). Topologically, residues 263 to 280 (LGNIFNNETLSIIHMLVN) are extracellular. N269 is a glycosylation site (N-linked (GlcNAc...) asparagine). Residues 281–301 (PANTLASFNSCLNPILYVFLG) form a helical membrane-spanning segment. Residues 302–323 (QEFRDRLIYSLYASLERALRED) are Cytoplasmic-facing.

It belongs to the G-protein coupled receptor 1 family. In terms of tissue distribution, expressed in 0.6 % of a subset of sensory neurons located in the apical layer of the vomeronasal organ. Each neuron appears to express only one receptor gene.

It is found in the cell membrane. Functionally, may have an olfactory function associated with the identification of pathogens or of pathogenic states. The protein is Formyl peptide receptor-related sequence 4 (Fpr-rs4) of Mus musculus (Mouse).